Consider the following 300-residue polypeptide: Ecto-ADP-ribosyltransferase 4 (300 aa).

Positions 1-23 (MALWLPGGQLTLLLLLWVQQTPA) are cleaved as a signal peptide. The Extracellular segment spans residues 24–269 (GSTEAPLKVD…QLLKACSKKC (246 aa)). Intrachain disulfides connect Cys48–Cys259 and Cys161–Cys210. Residues 70 to 255 (KYYSRAWQKA…INLRSAGNMS (186 aa)) enclose the TR mART core domain. 2 N-linked (GlcNAc...) asparagine glycosylation sites follow: Asn110 and Asn157. Gln185 provides a ligand contact to NAD(+). Residue Asn201 is glycosylated (N-linked (GlcNAc...) asparagine). Residue Ser219 participates in NAD(+) binding. Residue Asn253 is glycosylated (N-linked (GlcNAc...) asparagine). Residue Ala264 is the site of GPI-anchor amidated alanine attachment. The propeptide at 265–300 (CSKKCAPAPVVIGCLFLVTVVISSKSRAQRNLLAPF) is removed in mature form. A helical membrane pass occupies residues 270–286 (APAPVVIGCLFLVTVVI). At 287 to 300 (SSKSRAQRNLLAPF) the chain is on the cytoplasmic side.

It belongs to the Arg-specific ADP-ribosyltransferase family.

The protein resides in the membrane. The protein localises to the cell membrane. The enzyme catalyses L-arginyl-[protein] + NAD(+) = N(omega)-(ADP-D-ribosyl)-L-arginyl-[protein] + nicotinamide + H(+). The protein is Ecto-ADP-ribosyltransferase 4 (Art4) of Mus musculus (Mouse).